Here is a 969-residue protein sequence, read N- to C-terminus: Probable Rho-type GTPase-activating protein 3 (969 aa).

LIM zinc-binding domains lie at 17–81 (TVCF…CTAC) and 76–135 (HTCT…RHPS). Disordered stretches follow at residues 170–223 (IEIM…ADSL), 348–459 (ATSP…VEEL), and 613–646 (TSSKNTTSSINPLTAVSSNSGQSSGRPGPLSPNL). Residues 193–202 (ETPTNMSQAE) are compositionally biased toward polar residues. 2 stretches are compositionally biased toward low complexity: residues 212–223 (DSNLASNSADSL) and 350–361 (SPFRPFSPSYRS). 2 stretches are compositionally biased toward polar residues: residues 369–392 (TRSPNVQTHKKTSSQPSDLSSFAQ) and 418–432 (LSETSQQTLVPSLGS). Over residues 450 to 459 (SERDSDVEEL) the composition is skewed to basic and acidic residues. Low complexity predominate over residues 613–623 (TSSKNTTSSIN). Residues 624–637 (PLTAVSSNSGQSSG) show a composition bias toward polar residues. The segment at 697–744 (DHVFHVNAIFKPSRCYICSESVWGSELRCFHCSISCHSRCLKRLFAES) adopts a Phorbol-ester/DAG-type zinc-finger fold. The region spanning 780-966 (RSLENQLKIE…FMLDNVDKIL (187 aa)) is the Rho-GAP domain.

As to quaternary structure, interacts with dil1.

It localises to the cell tip. Its function is as follows. GTPase-activating protein for Rho-type proteins. This is Probable Rho-type GTPase-activating protein 3 (rga3) from Schizosaccharomyces pombe (strain 972 / ATCC 24843) (Fission yeast).